A 562-amino-acid chain; its full sequence is MNAMKRGLCCVLLLCGAVFALPSQEIHARVRRGARSYQVICRDEKTQMIYQQHQSWLRPVLRSNRVEYCWCNSGRAQCHSVPVRSCSEPRCFNGGTCQQALYFSDFVCQCPEGFAGKCCEIDTRATCYEDQGISYRGTWSTAESGAECTNWNSSALAQKPYSGRRPDAIRLGLGNHNYCRNPDRDSKPWCYVFKAGKYSSEFCSTPACSEGNSDCYFGNGLAYRGTHSLTESGASCLLWNSMILIGKVYTAQNPNAQALGLGKHNYCRNPDGDAKPWCHVLKNRRLTWEYCDVPSCSTCGLRQYSQPQFRIKGGLFADIASHPWQAAIFARHRRSPGERFLCGGILISSCWILSAAHCFQERFPPHHLTVILGRTYRVVPGEEEQKFEVEKYIVHKEFDDDTYDNDIALLQLKSDSSRCAQESSVVRTVCLPPADLQLPDWTECELSGYGKHEALSPFYSERLKEAHVRLYPSSRCTSQHLLNRTVADNMLCAGDTRSGGPQANLHDACQGDSGGPLVCLNDGRMTLVGIISWGLGCGEKDVPGVYTKVTNYLDWIHDNMRP.

A signal peptide spans 1-20 (MNAMKRGLCCVLLLCGAVFA). The propeptide occupies 21–32 (LPSQEIHARVRR). Residues 33-35 (GAR) constitute a propeptide, removed by plasmin. One can recognise a Fibronectin type-I domain in the interval 39 to 81 (VICRDEKTQMIYQQHQSWLRPVLRSNRVEYCWCNSGRAQCHSV). 17 disulfides stabilise this stretch: Cys41-Cys71, Cys69-Cys78, Cys86-Cys97, Cys91-Cys108, Cys110-Cys119, Cys127-Cys208, Cys148-Cys190, Cys179-Cys203, Cys215-Cys296, Cys236-Cys278, Cys267-Cys291, Cys299-Cys430, Cys342-Cys358, Cys350-Cys419, Cys444-Cys519, Cys476-Cys492, and Cys509-Cys537. Residues 42–52 (RDEKTQMIYQQ) form an important for binding to annexin A2 region. In terms of domain architecture, EGF-like spans 82–120 (PVRSCSEPRCFNGGTCQQALYFSDFVCQCPEGFAGKCCE). The O-linked (Fuc) threonine glycan is linked to Thr96. 2 Kringle domains span residues 126–208 (TCYE…TPAC) and 214–296 (DCYF…VPSC). Asn152 carries an N-linked (GlcNAc...) asparagine glycan. The Peptidase S1 domain maps to 311–561 (IKGGLFADIA…YLDWIHDNMR (251 aa)). Catalysis depends on charge relay system residues His357 and Asp406. N-linked (GlcNAc...) asparagine glycosylation is present at Asn483. Residue Ser513 is the Charge relay system of the active site.

The protein belongs to the peptidase S1 family. As to quaternary structure, heterodimer of chain A and chain B held by a disulfide bond. Binds to fibrin with high affinity. This interaction leads to an increase in the catalytic efficiency of the enzyme due to an increase in affinity for plasminogen. Similarly, binding to heparin increases the activation of plasminogen. Binds to annexin A2, cytokeratin-8, fibronectin and laminin. Binds to mannose receptor and the low-density lipoprotein receptor-related protein (LRP1); these proteins are involved in TPA clearance. Binds LRP1B; binding is followed by internalization and degradation. Forms heterodimer with SERPINA5. Interacts with SERPINE1. In complex with SERPINE1, interacts with SORL1. Post-translationally, the single chain, almost fully active enzyme, can be further processed into a two-chain fully active form by a cleavage after Arg-310 catalyzed by plasmin, tissue kallikrein or factor Xa.

The protein localises to the secreted. The protein resides in the extracellular space. The enzyme catalyses Specific cleavage of Arg-|-Val bond in plasminogen to form plasmin.. Inhibited by SERPINA5. Inhibited by SERPINE1. Converts the abundant, but inactive, zymogen plasminogen to plasmin by hydrolyzing a single Arg-Val bond in plasminogen. By controlling plasmin-mediated proteolysis, it plays an important role in tissue remodeling and degradation, in cell migration and many other physiopathological events. During oocyte activation, plays a role in cortical granule reaction in the zona reaction, which contributes to the block to polyspermy. The sequence is that of Tissue-type plasminogen activator (PLAT) from Pongo abelii (Sumatran orangutan).